Reading from the N-terminus, the 72-residue chain is Translation initiation factor IF-1 (72 aa).

Residues 1 to 72 (MSKEDSFEME…SKGRITYRAR (72 aa)) form the S1-like domain.

It belongs to the IF-1 family. Component of the 30S ribosomal translation pre-initiation complex which assembles on the 30S ribosome in the order IF-2 and IF-3, IF-1 and N-formylmethionyl-tRNA(fMet); mRNA recruitment can occur at any time during PIC assembly.

It localises to the cytoplasm. One of the essential components for the initiation of protein synthesis. Stabilizes the binding of IF-2 and IF-3 on the 30S subunit to which N-formylmethionyl-tRNA(fMet) subsequently binds. Helps modulate mRNA selection, yielding the 30S pre-initiation complex (PIC). Upon addition of the 50S ribosomal subunit IF-1, IF-2 and IF-3 are released leaving the mature 70S translation initiation complex. This Pseudomonas savastanoi pv. phaseolicola (strain 1448A / Race 6) (Pseudomonas syringae pv. phaseolicola (strain 1448A / Race 6)) protein is Translation initiation factor IF-1.